Reading from the N-terminus, the 456-residue chain is 1,3-beta-glucanosyltransferase gas4 (456 aa).

A signal peptide spans 1-25 (MGVANIIYALFLLGPSIFLKATAQT). Cysteines 68 and 97 form a disulfide. (1,3-beta-D-glucosyl)n-binding residues include tyrosine 86, asparagine 156, glutamate 157, aspartate 197, and arginine 202. Glutamate 157 functions as the Proton donor in the catalytic mechanism. 2 disulfide bridges follow: cysteine 211/cysteine 350 and cysteine 229/cysteine 260. N-linked (GlcNAc...) asparagine glycosylation occurs at asparagine 248. Glutamate 257 acts as the Nucleophile in catalysis. Tyrosine 296 lines the (1,3-beta-D-glucosyl)n pocket. Disordered stretches follow at residues 334-353 (NPKG…CPAN) and 384-434 (IEGP…ESGS). 2 N-linked (GlcNAc...) asparagine glycosylation sites follow: asparagine 353 and asparagine 415. Positions 417–434 (TSTTSYTSGMTSSSESGS) are enriched in low complexity. Serine 432 carries GPI-anchor amidated serine lipidation. A propeptide spans 433-456 (GSSKIGVAFCQALFITVLIATLSF) (removed in mature form).

This sequence belongs to the glycosyl hydrolase 72 family.

It localises to the cell membrane. Functionally, splits internally a 1,3-beta-glucan molecule and transfers the newly generated reducing end (the donor) to the non-reducing end of another 1,3-beta-glucan molecule (the acceptor) forming a 1,3-beta linkage, resulting in the elongation of 1,3-beta-glucan chains in the cell wall. Involved in spore wall assembly. This Schizosaccharomyces pombe (strain 972 / ATCC 24843) (Fission yeast) protein is 1,3-beta-glucanosyltransferase gas4 (gas4).